The primary structure comprises 180 residues: NAD(P)H-quinone oxidoreductase subunit J (180 aa).

Positions 1–16 (MNEETQTSELTNTDQG) are enriched in polar residues. The interval 1–23 (MNEETQTSELTNTDQGPQIEPGP) is disordered.

The protein belongs to the complex I 30 kDa subunit family. In terms of assembly, NDH-1 can be composed of about 15 different subunits; different subcomplexes with different compositions have been identified which probably have different functions.

The protein resides in the cellular thylakoid membrane. It carries out the reaction a plastoquinone + NADH + (n+1) H(+)(in) = a plastoquinol + NAD(+) + n H(+)(out). The catalysed reaction is a plastoquinone + NADPH + (n+1) H(+)(in) = a plastoquinol + NADP(+) + n H(+)(out). In terms of biological role, NDH-1 shuttles electrons from an unknown electron donor, via FMN and iron-sulfur (Fe-S) centers, to quinones in the respiratory and/or the photosynthetic chain. The immediate electron acceptor for the enzyme in this species is believed to be plastoquinone. Couples the redox reaction to proton translocation, and thus conserves the redox energy in a proton gradient. Cyanobacterial NDH-1 also plays a role in inorganic carbon-concentration. The protein is NAD(P)H-quinone oxidoreductase subunit J of Prochlorococcus marinus (strain MIT 9211).